The following is a 202-amino-acid chain: dTTP/UTP pyrophosphatase (202 aa).

Residue aspartate 76 is the Proton acceptor of the active site.

It belongs to the Maf family. YhdE subfamily. A divalent metal cation serves as cofactor.

The protein localises to the cytoplasm. The catalysed reaction is dTTP + H2O = dTMP + diphosphate + H(+). The enzyme catalyses UTP + H2O = UMP + diphosphate + H(+). In terms of biological role, nucleoside triphosphate pyrophosphatase that hydrolyzes dTTP and UTP. May have a dual role in cell division arrest and in preventing the incorporation of modified nucleotides into cellular nucleic acids. This is dTTP/UTP pyrophosphatase from Neisseria meningitidis serogroup B (strain ATCC BAA-335 / MC58).